The chain runs to 105 residues: Prokineticin-1 (105 aa).

An N-terminal signal peptide occupies residues 1-19 (MRGAVQVFIMLLLATVSDC). 5 disulfides stabilise this stretch: C26–C38, C32–C50, C37–C78, C60–C86, and C80–C96.

The protein belongs to the AVIT (prokineticin) family.

The protein localises to the secreted. Its function is as follows. Potently contracts gastrointestinal (GI) smooth muscle. Induces proliferation, migration and fenestration (the formation of membrane discontinuities) in capillary endothelial cells derived from endocrine glands. Has little or no effect on a variety of other endothelial and non-endothelial cell types. Induces proliferation and differentiation, but not migration, of enteric neural crest cells. Directly influences neuroblastoma progression by promoting the proliferation and migration of neuroblastoma cells. Positively regulates PTGS2 expression and prostaglandin synthesis. May play a role in placentation. May play a role in normal and pathological testis angiogenesis. The protein is Prokineticin-1 (Prok1) of Rattus norvegicus (Rat).